Consider the following 177-residue polypeptide: Ribulose bisphosphate carboxylase small subunit, chloroplastic 3 (177 aa).

A chloroplast-targeting transit peptide spans 1-56 (MASSMMASTAAAVARAGPAQSSMVPFNACRSSVPFPATRKANNNLSTLPGNGGRVS).

This sequence belongs to the RuBisCO small chain family. As to quaternary structure, heterohexadecamer of 8 large and 8 small subunits.

It is found in the plastid. The protein localises to the chloroplast. Functionally, ruBisCO catalyzes two reactions: the carboxylation of D-ribulose 1,5-bisphosphate, the primary event in carbon dioxide fixation, as well as the oxidative fragmentation of the pentose substrate. Both reactions occur simultaneously and in competition at the same active site. Although the small subunit is not catalytic it is essential for maximal activity. This is Ribulose bisphosphate carboxylase small subunit, chloroplastic 3 from Lemna gibba (Swollen duckweed).